The chain runs to 254 residues: Ribosomal RNA small subunit methyltransferase G (254 aa).

S-adenosyl-L-methionine contacts are provided by residues Gly84, Phe89, 136 to 137 (VE), and Arg155.

This sequence belongs to the methyltransferase superfamily. RNA methyltransferase RsmG family.

Its subcellular location is the cytoplasm. Specifically methylates the N7 position of a guanine in 16S rRNA. In Synechococcus sp. (strain CC9311), this protein is Ribosomal RNA small subunit methyltransferase G.